The chain runs to 153 residues: Interleukin-4 (153 aa).

A signal peptide spans 1–24 (MGLTSQLLPPLFFLLACAGNFAHG). Intrachain disulfides connect Cys27–Cys151, Cys48–Cys89, and Cys70–Cys123. A glycan (N-linked (GlcNAc...) asparagine) is linked at Asn62. N-linked (GlcNAc...) asparagine glycosylation is present at Asn129.

It belongs to the IL-4/IL-13 family.

It is found in the secreted. Functionally, participates in at least several B-cell activation processes as well as of other cell types. It is a costimulator of DNA-synthesis. It induces the expression of class II MHC molecules on resting B-cells. It enhances both secretion and cell surface expression of IgE and IgG1. It also regulates the expression of the low affinity Fc receptor for IgE (CD23) on both lymphocytes and monocytes. Positively regulates IL31RA expression in macrophages. Stimulates autophagy in dendritic cells by interfering with mTORC1 signaling and through the induction of RUFY4. The chain is Interleukin-4 (IL4) from Macaca mulatta (Rhesus macaque).